The following is a 207-amino-acid chain: Negative modulator of initiation of replication (207 aa).

Residues 43-54 (ATPITSSVTPSA) show a composition bias toward polar residues. Residues 43-63 (ATPITSSVTPSAPRQEAVNDE) are disordered.

It belongs to the SeqA family. Homodimer. Polymerizes to form helical filaments.

Its subcellular location is the cytoplasm. Its function is as follows. Negative regulator of replication initiation, which contributes to regulation of DNA replication and ensures that replication initiation occurs exactly once per chromosome per cell cycle. Binds to pairs of hemimethylated GATC sequences in the oriC region, thus preventing assembly of replication proteins and re-initiation at newly replicated origins. Repression is relieved when the region becomes fully methylated. This chain is Negative modulator of initiation of replication, found in Psychromonas ingrahamii (strain DSM 17664 / CCUG 51855 / 37).